The chain runs to 220 residues: Response regulator ArlR (220 aa).

The Response regulatory domain occupies 3-116 (KILIVEDEQN…ELLARIRAML (114 aa)). Aspartate 52 is modified (4-aspartylphosphate). Residues 122–220 (KNLIDIKGII…VRGVGYVVRQ (99 aa)) constitute a DNA-binding region (ompR/PhoB-type).

Phosphorylated by ArlS.

Its subcellular location is the cytoplasm. Member of the two-component regulatory system ArlS/ArlR. This Staphylococcus saprophyticus subsp. saprophyticus (strain ATCC 15305 / DSM 20229 / NCIMB 8711 / NCTC 7292 / S-41) protein is Response regulator ArlR (arlR).